We begin with the raw amino-acid sequence, 230 residues long: Ubiquitin carboxyl-terminal hydrolase isozyme L3 (230 aa).

A UCH catalytic domain is found at 5–229 (RWLPLEANPE…LRFNAIALSA (225 aa)). Residues 8 to 13 (PLEANP) form an interaction with ubiquitin region. Residue Cys-95 is the Nucleophile of the active site. A Phosphoserine modification is found at Ser-130. Residues 152-159 (AHEGQTEA) form an interaction with ubiquitin. Crossover loop which restricts access of large ubiquitin adducts to the active site region. His-169 serves as the catalytic Proton donor. The segment at 219-224 (ELRFNA) is interaction with ubiquitin.

This sequence belongs to the peptidase C12 family. As to quaternary structure, preferentially binds diubiquitin; the interaction does not hydrolyze diubiquitin but, in vitro, inhibits the hydrolyzing activity on other substrates. As to expression, ubiquitously expressed, with highest levels in brain, liver, heart, thymus, kidney and testis. Highly expressed in the cauda epididymidis, in meiotic pachytene spermatocytes and post-meiotic spematids. In the retina, enriched in the photoreceptor inner segment.

It is found in the cytoplasm. The enzyme catalyses Thiol-dependent hydrolysis of ester, thioester, amide, peptide and isopeptide bonds formed by the C-terminal Gly of ubiquitin (a 76-residue protein attached to proteins as an intracellular targeting signal).. Inhibited by monoubiquitin and diubiquitin. Its function is as follows. Deubiquitinating enzyme (DUB) that controls levels of cellular ubiquitin through processing of ubiquitin precursors and ubiquitinated proteins. Thiol protease that recognizes and hydrolyzes a peptide bond at the C-terminal glycine of either ubiquitin or NEDD8. Has a 10-fold preference for Arg and Lys at position P3'', and exhibits a preference towards 'Lys-48'-linked ubiquitin chains. Deubiquitinates ENAC in apical compartments, thereby regulating apical membrane recycling. Indirectly increases the phosphorylation of IGFIR, AKT and FOXO1 and promotes insulin-signaling and insulin-induced adipogenesis. Required for stress-response retinal, skeletal muscle and germ cell maintenance. May be involved in working memory. Can hydrolyze UBB(+1), a mutated form of ubiquitin which is not effectively degraded by the proteasome. In Mus musculus (Mouse), this protein is Ubiquitin carboxyl-terminal hydrolase isozyme L3 (Uchl3).